A 353-amino-acid chain; its full sequence is Photosystem II D2 protein (353 aa).

Thr2 carries the N-acetylthreonine modification. The residue at position 2 (Thr2) is a Phosphothreonine. The chain crosses the membrane as a helical span at residues 41 to 61 (CAYFALGGWFTGTTFVTSWYT). His118 is a binding site for chlorophyll a. Residues 125–141 (GFMLRQFELARSVQLRP) form a helical membrane-spanning segment. Residues Gln130 and Asn143 each contribute to the pheophytin a site. Residues 153 to 166 (VFVSVFLIYPLGQS) form a helical membrane-spanning segment. A chlorophyll a-binding site is contributed by His198. The chain crosses the membrane as a helical span at residues 208–228 (AALLCAIHGATVENTLFEDGD). The a plastoquinone site is built by His215 and Phe262. His215 is a Fe cation binding site. His269 contacts Fe cation. The chain crosses the membrane as a helical span at residues 279–295 (GLWMSAIGVVGLALNLR).

The protein belongs to the reaction center PufL/M/PsbA/D family. In terms of assembly, PSII is composed of 1 copy each of membrane proteins PsbA, PsbB, PsbC, PsbD, PsbE, PsbF, PsbH, PsbI, PsbJ, PsbK, PsbL, PsbM, PsbT, PsbX, PsbY, PsbZ, Psb30/Ycf12, at least 3 peripheral proteins of the oxygen-evolving complex and a large number of cofactors. It forms dimeric complexes. The D1/D2 heterodimer binds P680, chlorophylls that are the primary electron donor of PSII, and subsequent electron acceptors. It shares a non-heme iron and each subunit binds pheophytin, quinone, additional chlorophylls, carotenoids and lipids. There is also a Cl(-1) ion associated with D1 and D2, which is required for oxygen evolution. The PSII complex binds additional chlorophylls, carotenoids and specific lipids. is required as a cofactor.

It localises to the plastid. The protein localises to the chloroplast thylakoid membrane. It catalyses the reaction 2 a plastoquinone + 4 hnu + 2 H2O = 2 a plastoquinol + O2. Functionally, photosystem II (PSII) is a light-driven water:plastoquinone oxidoreductase that uses light energy to abstract electrons from H(2)O, generating O(2) and a proton gradient subsequently used for ATP formation. It consists of a core antenna complex that captures photons, and an electron transfer chain that converts photonic excitation into a charge separation. The D1/D2 (PsbA/PsbD) reaction center heterodimer binds P680, the primary electron donor of PSII as well as several subsequent electron acceptors. D2 is needed for assembly of a stable PSII complex. The sequence is that of Photosystem II D2 protein from Welwitschia mirabilis (Tree tumbo).